Consider the following 143-residue polypeptide: Large ribosomal subunit protein uL11 (143 aa).

This sequence belongs to the universal ribosomal protein uL11 family. In terms of assembly, part of the ribosomal stalk of the 50S ribosomal subunit. Interacts with L10 and the large rRNA to form the base of the stalk. L10 forms an elongated spine to which L12 dimers bind in a sequential fashion forming a multimeric L10(L12)X complex. In terms of processing, one or more lysine residues are methylated.

Forms part of the ribosomal stalk which helps the ribosome interact with GTP-bound translation factors. This chain is Large ribosomal subunit protein uL11, found in Saccharophagus degradans (strain 2-40 / ATCC 43961 / DSM 17024).